We begin with the raw amino-acid sequence, 69 residues long: MARPNASELRQLSDADITEQINGLRRELFDLRFQQATRQLGNTHRFKQSRIKLAQLLTVQKERQSSTAS.

The protein belongs to the universal ribosomal protein uL29 family.

The polypeptide is Large ribosomal subunit protein uL29 (Synechococcus sp. (strain WH7803)).